A 432-amino-acid chain; its full sequence is Nuclear pore complex-interacting protein family member B9 (432 aa).

Disordered regions lie at residues 260–280 (RMGRQPPPPTQQHSITDNSLS) and 353–420 (SPLP…LRTR). Residues 270–280 (QQHSITDNSLS) are compositionally biased toward polar residues. A compositionally biased stretch (basic and acidic residues) spans 374-402 (EVEKPPKPKRWRVDEVEQSPKPKRQREAE). Residues 408–420 (KPKRRRLSKLRTR) show a composition bias toward basic residues.

The protein belongs to the NPIP family.

This chain is Nuclear pore complex-interacting protein family member B9 (NPIPB9), found in Homo sapiens (Human).